The chain runs to 379 residues: Pre-mRNA-processing protein 45 (379 aa).

The segment covering 1–10 (MFSNRLPPPK) has biased composition (pro residues). Disordered regions lie at residues 1 to 22 (MFSN…ALSS) and 353 to 379 (SEGA…NYGA). Positions 368–379 (AESDDKSDNYGA) are enriched in basic and acidic residues.

The protein belongs to the SNW family. Belongs to the CWC complex (or CEF1-associated complex), a spliceosome sub-complex reminiscent of a late-stage spliceosome composed of the U2, U5 and U6 snRNAs and at least BUD13, BUD31, BRR2, CDC40, CEF1, CLF1, CUS1, CWC2, CWC15, CWC21, CWC22, CWC23, CWC24, CWC25, CWC27, ECM2, HSH155, IST3, ISY1, LEA1, MSL1, NTC20, PRP8, PRP9, PRP11, PRP19, PRP21, PRP22, PRP45, PRP46, SLU7, SMB1, SMD1, SMD2, SMD3, SMX2, SMX3, SNT309, SNU114, SPP2, SYF1, SYF2, RSE1 and YJU2. Interacts with CLF1, PRP22 and PRP46. Interacts with SPP382.

The protein resides in the nucleus. In terms of biological role, involved in pre-mRNA splicing. Associated with the spliceosome throughout the splicing reactions, until after the second catalytic step. The chain is Pre-mRNA-processing protein 45 (PRP45) from Saccharomyces cerevisiae (strain ATCC 204508 / S288c) (Baker's yeast).